Reading from the N-terminus, the 353-residue chain is Outer membrane protein P2 (353 aa).

The N-terminal stretch at methionine 1–alanine 20 is a signal peptide.

Belongs to the Gram-negative porin family. As to quaternary structure, homotrimer.

Its subcellular location is the cell outer membrane. In terms of biological role, forms pores that allow passive diffusion of small molecules across the outer membrane. The protein is Outer membrane protein P2 (ompP2) of Haemophilus influenzae.